The chain runs to 340 residues: MLEKNPVISVKNLNKEIGNHRILNDISFSVCSGEILGIIGHSGSGKSTLLRCLDFLISPTSGSISIAGFHNSSAKEKISRSDFAKRVAYISQNGGLFLAKTVFENIAYPLKIRYPEMTKSLIEEKVNEALHFLNLYERKHAYPSRLSGGQKQKAAIAIAIVSDPQVLLCDEITSALDPRSTEDITDKLLQLNEERGITQVFVSHEIEVIKKLCTHTLVMHQGNIEELGPADKLFLNPYSSITEELFHMNSIAKGIYDHNENEEILRLGFPKGLAVQGMISQLIQGGQISINILSGDINLFRKIPLGFLIIVLSGEKKLRDRAKDILIGKGVIVQKFQKSR.

In terms of domain architecture, ABC transporter spans 8–246 (ISVKNLNKEI…PYSSITEELF (239 aa)). Position 40–47 (40–47 (GHSGSGKS)) interacts with ATP.

Belongs to the ABC transporter superfamily. Methionine importer (TC 3.A.1.24) family. In terms of assembly, the complex is composed of two ATP-binding proteins (MetN), two transmembrane proteins (MetI) and a solute-binding protein (MetQ).

Its subcellular location is the cell inner membrane. The enzyme catalyses L-methionine(out) + ATP + H2O = L-methionine(in) + ADP + phosphate + H(+). It catalyses the reaction D-methionine(out) + ATP + H2O = D-methionine(in) + ADP + phosphate + H(+). Functionally, part of the ABC transporter complex MetNIQ involved in methionine import. Responsible for energy coupling to the transport system. The sequence is that of Methionine import ATP-binding protein MetN from Chlamydia felis (strain Fe/C-56) (Chlamydophila felis).